The following is an 843-amino-acid chain: Axin-2 (843 aa).

A disordered region spans residues Met-1–Leu-75. The Tankyrase-binding motif signature appears at Ala-21–Glu-30. A compositionally biased stretch (basic and acidic residues) spans Arg-56 to Ala-69. The RGS domain occupies Ser-81 to Val-200. Residues Val-327–Ser-413 are interaction with GSK3B. Residues Gln-334–Glu-393 form an interaction with SIAH1 and SIAH2 region. 4 disordered regions span residues Gln-396–Pro-435, Leu-447–Pro-494, Ala-561–Pro-674, and Ala-718–Lys-748. An interaction with beta-catenin region spans residues Ser-413–Gln-476. Low complexity-rich tracts occupy residues Tyr-477–Pro-494 and Pro-588–Gly-597. Positions Ser-727–Ser-741 are enriched in polar residues. The region spanning Ala-761–Asp-843 is the DIX domain.

As to quaternary structure, interacts with glycogen synthase kinase-3 beta (GSK3B) and beta-catenin. The interaction between axin and beta-catenin occurs via the armadillo repeats contained in beta-catenin. Interacts with SMAD7 and RNF111. Interacts with ANKRD6. Interacts with SIAH1. Interacts with SIAH2. In terms of processing, probably phosphorylated by GSK3B and dephosphorylated by PP2A. Post-translationally, ADP-ribosylated by tankyrase TNKS and TNKS2. Poly-ADP-ribosylated protein is recognized by RNF146, followed by ubiquitination and subsequent activation of the Wnt signaling pathway. Ubiquitinated by RNF146 when poly-ADP-ribosylated, leading to its degradation and subsequent activation of the Wnt signaling pathway. Deubiquitinated by USP34, deubiquitinated downstream of beta-catenin stabilization step: deubiquitination is important Wnt signaling to positively regulate beta-catenin (CTNBB1)-mediated transcription. As to expression, expressed in brain and lymphoblast.

It is found in the cytoplasm. Its function is as follows. Inhibitor of the Wnt signaling pathway. Down-regulates beta-catenin. Probably facilitate the phosphorylation of beta-catenin and APC by GSK3B. The protein is Axin-2 (AXIN2) of Homo sapiens (Human).